We begin with the raw amino-acid sequence, 231 residues long: Ion-translocating oxidoreductase complex subunit E (231 aa).

6 helical membrane passes run Ala-18–Ala-38, Leu-39–Leu-59, Thr-63–Val-83, Leu-86–Val-106, Ala-125–Leu-145, and Pro-182–Gly-202.

This sequence belongs to the NqrDE/RnfAE family. The complex is composed of six subunits: RsxA, RsxB, RsxC, RsxD, RsxE and RsxG.

The protein resides in the cell inner membrane. In terms of biological role, part of a membrane-bound complex that couples electron transfer with translocation of ions across the membrane. Required to maintain the reduced state of SoxR. The polypeptide is Ion-translocating oxidoreductase complex subunit E (Escherichia coli O1:K1 / APEC).